The sequence spans 1308 residues: MDPSGSRGRPTWVLAGGLLAVALALGGRGCLGASSRPRWRPLGAQPPRDPQVAPRSGPGLRIPPGRSGAGPESSTQDLPCMIWPKVECCHFKTAVEAPLGMKLDKKMEVFIPLSTSAASSGPWAHSLFAFIPSWPKKNLFKRESPITHRLYGDISREVQGTSENGVIFQKCALVSGSSEAQTARIWLLVNNTKTTSSANLSELLLLDSIAGLTIWDSVGNRTSEGFQAFSKKFLQVGDAFAVSYAATLQAGDLGNGESLKLPAQLTFQSSSRNRTQLKVLFSITAEENVTVLPHHGLHAAGFFIAFLLSLVLTWAALFLMVRYQCLKGNMLTRHRVWQYESKLEPLPFTSADGVNEDLSLNDQMIDILSSEDPGSMLQALEELEIATLNRADADLEACRTQISKDIIALLLKNLTSSGHLSPQVERKMSAVFKKQFLLLENEIQEEYDRKMVALTAECDLETRKKMENQYQREMMAMEEAEELLKRAGERSAVECSNLLRTLHGLEQEHLRKSLALQQEEDFAKAHRQLAVFQRNELHSIFFTQIKSAIFKGELKPEAAKMLLQNYSKIQENVEELMDFFQASKRYHLSKRFGHREYLVQNLQSSETRVQGLLSTAAAQLTHLIQKHERAGYLDEDQMEMLLERAQTEVFSIKQKLDNDLKQEKKKLHQKLITKRRRELLQKHREQRREQASVGEAFRTVEDAGQYLHQKRSLMEEHGATLEELQERLDQAALDDLRTLTLSLFEKATDELRRLQNSAMTQELLKRGVPWLFLQQILEEHGKEMAARAEQLEGEERDRDQEGVQSVRQRLKDDAPEAVTEEQAELRRWEHLIFMKLCSSVFSLSEEELLRMRQEVHGCFAQMDRSLALPKIRARVLLQQFQTAWREAEFVKLDQAVAAPELQQQSKVRKSRSKSKSKGELLKKCIEDKIHLCEEQASEDLVEKVRGELLRERVQRMEAQEGGFAQSLVALQFQKASRVTETLSAYTALLSIQDLLLEELSASEMLTKSACTQILESHSRELQELERKLEDQLVQQEAAQQQQALASWQQWVADGPGILNEPGEVDSERQVSTVLHQALSKSQTLLEQHQQCLREEQQNSVVLEDLLENMEADTFATLCSQELRLASYLARMAMVPGATLRRLLSVVLPTASQPQLLALLDSATERHVDHAAESDGGAEQADVGRRRKHQSWWQALDGKLRGDLISRGLEKMLWARKRKQSILKKTCLPLRERMIFSGKGSWPHLSLEPIGELAPVPIVGAETIDLLNTGEKLFIFRNPKEPEISLHVPPRKKKNFLNAKKAMRALGMD.

Residues 1-26 (MDPSGSRGRPTWVLAGGLLAVALALG) form the signal peptide. Topologically, residues 27–300 (GRGCLGASSR…VLPHHGLHAA (274 aa)) are extracellular. The segment at 36–76 (RPRWRPLGAQPPRDPQVAPRSGPGLRIPPGRSGAGPESSTQ) is disordered. Asparagine 220 carries N-linked (GlcNAc...) asparagine glycosylation. A helical transmembrane segment spans residues 301–321 (GFFIAFLLSLVLTWAALFLMV). At 322-1308 (RYQCLKGNML…KKAMRALGMD (987 aa)) the chain is on the cytoplasmic side. Coiled-coil stretches lie at residues 455 to 578 (TAEC…ELMD), 636 to 800 (DQME…DRDQ), and 1001 to 1113 (ASEM…EADT). Positions 784–801 (MAARAEQLEGEERDRDQE) are enriched in basic and acidic residues. Positions 784–816 (MAARAEQLEGEERDRDQEGVQSVRQRLKDDAPE) are disordered.

In terms of assembly, component of the EvC complex composed of EFCAB7, IQCE, EVC2 and EVC; built from two subcomplexes, EVC2:EVC and EFCAB7:IQCE. Interacts with EVC. Interacts (via N-terminal end) with EFCAB7. Interacts (via N-terminal end) with IQCE. As to expression, found in the heart, placenta, lung, liver, skeletal muscle, kidney and pancreas.

Its subcellular location is the cell membrane. It localises to the cytoplasm. The protein localises to the cytoskeleton. The protein resides in the cilium basal body. It is found in the cell projection. Its subcellular location is the cilium. It localises to the cilium membrane. The protein localises to the nucleus. Functionally, component of the EvC complex that positively regulates ciliary Hedgehog (Hh) signaling. Plays a critical role in bone formation and skeletal development. May be involved in early embryonic morphogenesis. The protein is Limbin (EVC2) of Homo sapiens (Human).